The primary structure comprises 178 residues: Cytochrome b6-f complex iron-sulfur subunit (178 aa).

Residues 20 to 42 (LLTFGSVTGVALGSLYPVVKYFI) form a helical membrane-spanning segment. Residues 68 to 161 (WLANHSDGDR…IAVENDNVFV (94 aa)) enclose the Rieske domain. [2Fe-2S] cluster is bound by residues C107, H109, C125, and H128. A disulfide bond links C112 and C127.

This sequence belongs to the Rieske iron-sulfur protein family. The 4 large subunits of the cytochrome b6-f complex are cytochrome b6, subunit IV (17 kDa polypeptide, PetD), cytochrome f and the Rieske protein, while the 4 small subunits are PetG, PetL, PetM and PetN. The complex functions as a dimer. Requires [2Fe-2S] cluster as cofactor.

Its subcellular location is the cellular thylakoid membrane. The catalysed reaction is 2 oxidized [plastocyanin] + a plastoquinol + 2 H(+)(in) = 2 reduced [plastocyanin] + a plastoquinone + 4 H(+)(out). Component of the cytochrome b6-f complex, which mediates electron transfer between photosystem II (PSII) and photosystem I (PSI), cyclic electron flow around PSI, and state transitions. The polypeptide is Cytochrome b6-f complex iron-sulfur subunit (Prochlorococcus marinus (strain MIT 9303)).